The sequence spans 236 residues: Envelope glycoprotein (236 aa).

Residues cysteine 1–asparagine 202 are Lumenal-facing. Asparagine 25 carries N-linked (GlcNAc...) asparagine; by host glycosylation. 5 disulfide bridges follow: cysteine 67-cysteine 97, cysteine 90-cysteine 142, cysteine 107-cysteine 112, cysteine 143-cysteine 148, and cysteine 182-cysteine 186. Residues tryptophan 203 to cysteine 223 traverse the membrane as a helical segment. Binding to the ribonucleoprotein regions lie at residues leucine 219 to arginine 231 and leucine 219 to proline 236. The Cytoplasmic portion of the chain corresponds to cysteine 224–proline 236.

Belongs to the hantavirus envelope glycoprotein family. As to quaternary structure, homodimer. Homotetramer; forms heterotetrameric Gn-Gc spikes in the pre-fusion conformation. Homotrimer; forms homotrimer in the post-fusion conformation at acidic pH. Interacts (via C-terminus) with the nucleoprotein. Post-translationally, envelope polyprotein precursor is quickly cleaved in vivo just after synthesis, presumably by host signal peptidase.

Its subcellular location is the virion membrane. It localises to the host cell surface. The protein resides in the host Golgi apparatus membrane. It is found in the host endoplasmic reticulum membrane. Its function is as follows. Forms homotetramers with glycoprotein N at the surface of the virion. Attaches the virion to host cell receptors including integrin ITGAV/ITGB3. This attachment induces virion internalization predominantly through clathrin-dependent endocytosis. Class II fusion protein that promotes fusion of viral membrane with host endosomal membrane after endocytosis of the virion. The sequence is that of Envelope glycoprotein (GP) from Homo sapiens (Human).